A 334-amino-acid chain; its full sequence is MGRSPISDDSGLKKGPWTPDEDEKLVNYVQKHGHSSWRALPKLAGLNRCGKSCRLRWTNYLRPDIKRGRFSPDEEQTILNLHSVLGNKWSTIANQLPGRTDNEIKNFWNTHLKKKLIQMGFDPMTHRPRTDIFSGLSQLMSLSSNLRGFVDLQQQFPIDQEHTILKLQTEMAKLQLFQYLLQPSSMSNNVNPNDFDTLSLLNSIASFKETSNNTTSNNLDLGFLGSYLQDFHSLPSLKTLNSNMEPSSVFPQNLDDNHFKFSTQRENLPVSPIWLSDPSSTTPAHVNDDLIFNQYGIEDVNSNITSSSGQESGASASAAWPDHLLDDSIFSDIP.

2 HTH myb-type domains span residues 9–61 (DSGL…TNYL) and 62–116 (RPDI…KKKL). 2 DNA-binding regions (H-T-H motif) span residues 37–61 (WRAL…TNYL) and 89–112 (WSTI…NTHL).

In terms of assembly, interacts with FBX5. As to expression, highly expressed in roots and at lower levels in stems, flowers and siliques.

The protein localises to the nucleus. Its function is as follows. Probable transcription factor. The chain is Transcription factor MYB92 from Arabidopsis thaliana (Mouse-ear cress).